A 269-amino-acid polypeptide reads, in one-letter code: Formamidopyrimidine-DNA glycosylase (269 aa).

The Schiff-base intermediate with DNA role is filled by Pro-2. Glu-3 functions as the Proton donor in the catalytic mechanism. Lys-57 serves as the catalytic Proton donor; for beta-elimination activity. DNA contacts are provided by His-90, Arg-109, and Lys-150. An FPG-type zinc finger spans residues 235–269 (QVYGRKGEPCRVCGTPIVATKHAQRATFYCRHCQK). Arg-259 functions as the Proton donor; for delta-elimination activity in the catalytic mechanism.

The protein belongs to the FPG family. In terms of assembly, monomer. Requires Zn(2+) as cofactor.

The enzyme catalyses Hydrolysis of DNA containing ring-opened 7-methylguanine residues, releasing 2,6-diamino-4-hydroxy-5-(N-methyl)formamidopyrimidine.. It carries out the reaction 2'-deoxyribonucleotide-(2'-deoxyribose 5'-phosphate)-2'-deoxyribonucleotide-DNA = a 3'-end 2'-deoxyribonucleotide-(2,3-dehydro-2,3-deoxyribose 5'-phosphate)-DNA + a 5'-end 5'-phospho-2'-deoxyribonucleoside-DNA + H(+). Its function is as follows. Involved in base excision repair of DNA damaged by oxidation or by mutagenic agents. Acts as a DNA glycosylase that recognizes and removes damaged bases. Has a preference for oxidized purines, such as 7,8-dihydro-8-oxoguanine (8-oxoG). Has AP (apurinic/apyrimidinic) lyase activity and introduces nicks in the DNA strand. Cleaves the DNA backbone by beta-delta elimination to generate a single-strand break at the site of the removed base with both 3'- and 5'-phosphates. The polypeptide is Formamidopyrimidine-DNA glycosylase (Salmonella paratyphi C (strain RKS4594)).